The following is a 129-amino-acid chain: Small ribosomal subunit protein uS11c (129 aa).

It belongs to the universal ribosomal protein uS11 family. In terms of assembly, part of the 30S ribosomal subunit.

It is found in the plastid. Its subcellular location is the chloroplast. The polypeptide is Small ribosomal subunit protein uS11c (Gracilaria tenuistipitata var. liui (Red alga)).